We begin with the raw amino-acid sequence, 288 residues long: MAGAKEIRTKIGSVKSTQKITKAMEMVAASKMRRSQDAMESSRPYAQTIRKVIGHVANASLEYRHPYLEEREAKRVGYIIISTDRGLCGGLNINLFKKAITDMQTWKEKGAQIELAIIGSKATAFFNNSGAKVAAQVSGLGDSPSLEDLIGSVGVMLKKYDKGELDRLYLVFNQFVNTMVQKPKIDQLLPLPKSDSEDMQRDHMWDYIYEPEPKPLLDALLLRFIESQVYQGVVENLACEQAARMVAMKAATDNASNLIDDLQLVYNKARQAAITQELSEIVGGAAAV.

This sequence belongs to the ATPase gamma chain family. In terms of assembly, F-type ATPases have 2 components, CF(1) - the catalytic core - and CF(0) - the membrane proton channel. CF(1) has five subunits: alpha(3), beta(3), gamma(1), delta(1), epsilon(1). CF(0) has three main subunits: a, b and c.

It is found in the cell inner membrane. In terms of biological role, produces ATP from ADP in the presence of a proton gradient across the membrane. The gamma chain is believed to be important in regulating ATPase activity and the flow of protons through the CF(0) complex. This Vibrio cholerae serotype O1 (strain ATCC 39541 / Classical Ogawa 395 / O395) protein is ATP synthase gamma chain.